Reading from the N-terminus, the 137-residue chain is Large ribosomal subunit protein bL12 (137 aa).

This sequence belongs to the bacterial ribosomal protein bL12 family. Homodimer. Part of the ribosomal stalk of the 50S ribosomal subunit. Forms a multimeric L10(L12)X complex, where L10 forms an elongated spine to which 2 to 4 L12 dimers bind in a sequential fashion. Binds GTP-bound translation factors.

Forms part of the ribosomal stalk which helps the ribosome interact with GTP-bound translation factors. Is thus essential for accurate translation. In Synechococcus sp. (strain JA-3-3Ab) (Cyanobacteria bacterium Yellowstone A-Prime), this protein is Large ribosomal subunit protein bL12.